A 614-amino-acid polypeptide reads, in one-letter code: Sodium- and chloride-dependent betaine transporter (614 aa).

The tract at residues 1–33 (MDRKVAVPEDGPPVVSWLPEEGEKLDQEGEDQV) is disordered. Topologically, residues 1–44 (MDRKVAVPEDGPPVVSWLPEEGEKLDQEGEDQVKDRGQWTNKME) are cytoplasmic. Over residues 21 to 33 (EGEKLDQEGEDQV) the composition is skewed to basic and acidic residues. A run of 3 helical transmembrane segments spans residues 45–65 (FVLS…FPYL), 73–92 (AFFI…VFFL), and 117–137 (GIGL…IIIL). The Extracellular segment spans residues 138 to 210 (AWALFYLFSS…SGIHDLGALR (73 aa)). A disulfide bridge connects residues Cys157 and Cys166. N-linked (GlcNAc...) asparagine glycosylation is found at Asn171 and Asn183. The next 9 helical transmembrane spans lie at 211–229 (WELA…FCIW), 238–255 (VVYF…ILLI), 291–308 (IFFS…LGSY), 320–341 (IALC…FSIL), 374–393 (MPLS…FLGL), 423–441 (LLIL…FLVT), 458–478 (GICL…VYGA), 499–518 (ISWL…FSLS), and 538–556 (IGWF…FVII). The Cytoplasmic segment spans residues 557-614 (TLLKTRGSFKKRLRQLTTPDPSLPQPKQHLYLDGGTSQDCGPSPTKEGLIVGEKETHL). Residues 591 to 614 (GTSQDCGPSPTKEGLIVGEKETHL) are disordered.

The protein belongs to the sodium:neurotransmitter symporter (SNF) (TC 2.A.22) family. SLC6A12 subfamily. Interacts with LIN7C. In terms of tissue distribution, kidney.

It localises to the basolateral cell membrane. The protein localises to the cell membrane. The enzyme catalyses 4-aminobutanoate(out) + chloride(out) + 3 Na(+)(out) = 4-aminobutanoate(in) + chloride(in) + 3 Na(+)(in). It catalyses the reaction glycine betaine(out) + 2 chloride(out) + 3 Na(+)(out) = glycine betaine(in) + 2 chloride(in) + 3 Na(+)(in). Its function is as follows. Transporter that mediates cellular uptake of betaine and GABA in a sodium- and chloride-dependent process. May have a role in regulation of GABAergic transmission in the brain through the reuptake of GABA into presynaptic terminals, as well as in osmotic regulation. Probably also involved in renal and hepatic osmotic regulation. The chain is Sodium- and chloride-dependent betaine transporter (SLC6A12) from Canis lupus familiaris (Dog).